Here is a 630-residue protein sequence, read N- to C-terminus: Cyclin-T1-2 (630 aa).

Residues 288-297 (QSSLSVSSSS) are compositionally biased toward low complexity. 2 disordered regions span residues 288-313 (QSSL…DSSQ) and 410-439 (RSGD…VEPP). Residues 421-439 (GGSSLTDVDSKSTQSVEPP) are compositionally biased toward polar residues.

It belongs to the cyclin family. Cyclin T subfamily.

This Oryza sativa subsp. japonica (Rice) protein is Cyclin-T1-2 (CYCT1_2).